The chain runs to 199 residues: Ribonuclease HII (199 aa).

Positions 14 to 199 constitute an RNase H type-2 domain; the sequence is GLLAGVDEAG…SFAPVAEVLR (186 aa). A divalent metal cation-binding residues include Asp20, Glu21, and Asp112.

The protein belongs to the RNase HII family. The cofactor is Mn(2+). Mg(2+) is required as a cofactor.

It localises to the cytoplasm. The catalysed reaction is Endonucleolytic cleavage to 5'-phosphomonoester.. Endonuclease that specifically degrades the RNA of RNA-DNA hybrids. The protein is Ribonuclease HII of Polaromonas sp. (strain JS666 / ATCC BAA-500).